A 490-amino-acid polypeptide reads, in one-letter code: MESRKNSDRQMRRANCFSAGERMKTRSPSVIVIGGGFGGISAARTLQDASFQVMVLESRDRIGGRVHTDYSFGFPVDLGASWLHGVCKENPLAPVIGRLGLPLYRTSGDNSVLYDHDLESYALFDMDGNQVPQELVTQIGVTFERILEEINKVRDEQDADISISQAFSIVFSRKPELRLEGLAHNVLQWYVCRMEGWFAADAETISAKCWDQEELLPGGHGLMVRGYRPVINTLAKGLDIRVGHRVTKIVRRYNGVKVTTENGQTFVADAAVIAVPLGVLKSGTIKFEPKLPEWKQEAINDLGVGIENKIILHFEKVFWPKVEFLGVVAETSYGCSYFLNLHKATGHPVLVYMPAGQLAKDIEKMSDEAAANFAVLQLQRILPDALPPVQYLVSRWGSDVNSMGSYSYDIVGKPHDLYERLRVPVDNLFFAGEATSSSFPGSVHGAYSTGLMAAEDCRMRVLERYGELDLFQPVMGEEGPASVPLLISRL.

FAD-binding residues include glutamate 57, arginine 65, valine 246, and glutamate 433. The Microbody targeting signal motif lies at serine 488–leucine 490.

This sequence belongs to the flavin monoamine oxidase family. Requires FAD as cofactor. Highly expressed in flowers and siliques. Also found in leaf and stem and in low levels in cotyledons, roots and in seedlings.

It is found in the peroxisome. It carries out the reaction spermine + O2 + H2O = 3-aminopropanal + spermidine + H2O2. It catalyses the reaction N(1)-acetylspermine + O2 + H2O = 3-acetamidopropanal + spermidine + H2O2. The catalysed reaction is spermidine + O2 + H2O = 3-aminopropanal + putrescine + H2O2. It participates in amine and polyamine degradation; spermine degradation. It functions in the pathway amine and polyamine degradation; spermidine degradation. Functionally, flavoenzyme involved in polyamine back-conversion. Catalyzes the oxidation of the secondary amino group of polyamines, such as spermine, spermidine and their acetyl derivatives. Substrate preference is N(1)-acetylspermine &gt; spermine &gt; spermidine. Plays an important role in the regulation of polyamine intracellular concentration. Involved in abscisic acid-mediated developmental processes. May contribute to nitric oxide-mediated effects on root growth. This is Polyamine oxidase 2 from Arabidopsis thaliana (Mouse-ear cress).